The primary structure comprises 64 residues: Alpha-conotoxin-like Ac1.1b (64 aa).

The N-terminal stretch at 1–21 (MGMRMMFTLFLLVVLTTTVVS) is a signal peptide. The propeptide occupies 22–47 (FPSDSASDGRDDEAKDERSDMYKSKR). The interval 23–46 (PSDSASDGRDDEAKDERSDMYKSK) is disordered. Positions 28 to 44 (SDGRDDEAKDERSDMYK) are enriched in basic and acidic residues. Disulfide bonds link Cys-51–Cys-56 and Cys-52–Cys-62. Cys-62 carries the cysteine amide modification.

It belongs to the conotoxin A superfamily. As to expression, expressed by the venom duct.

Its subcellular location is the secreted. Its function is as follows. Alpha-conotoxins act on postsynaptic membranes, they bind to the nicotinic acetylcholine receptors (nAChR) and thus inhibit them. The chain is Alpha-conotoxin-like Ac1.1b from Conus achatinus (Little frog cone).